The sequence spans 178 residues: ATP synthase subunit delta (178 aa).

The protein belongs to the ATPase delta chain family. F-type ATPases have 2 components, F(1) - the catalytic core - and F(0) - the membrane proton channel. F(1) has five subunits: alpha(3), beta(3), gamma(1), delta(1), epsilon(1). F(0) has three main subunits: a(1), b(2) and c(10-14). The alpha and beta chains form an alternating ring which encloses part of the gamma chain. F(1) is attached to F(0) by a central stalk formed by the gamma and epsilon chains, while a peripheral stalk is formed by the delta and b chains.

It is found in the cell membrane. In terms of biological role, f(1)F(0) ATP synthase produces ATP from ADP in the presence of a proton or sodium gradient. F-type ATPases consist of two structural domains, F(1) containing the extramembraneous catalytic core and F(0) containing the membrane proton channel, linked together by a central stalk and a peripheral stalk. During catalysis, ATP synthesis in the catalytic domain of F(1) is coupled via a rotary mechanism of the central stalk subunits to proton translocation. This protein is part of the stalk that links CF(0) to CF(1). It either transmits conformational changes from CF(0) to CF(1) or is implicated in proton conduction. The chain is ATP synthase subunit delta from Buchnera aphidicola subsp. Baizongia pistaciae (strain Bp).